Here is a 772-residue protein sequence, read N- to C-terminus: Calcium-binding mitochondrial carrier protein (772 aa).

The segment at 1 to 377 is N-terminal domain; it reads MFANRVRQAQ…SISDFEKSTG (377 aa). EF-hand domains lie at 132–165, 166–201, 235–270, and 347–382; these read LDAD…ELMA, KPEA…SLDP, LQQE…VKLR, and ITPL…NINK. Ca(2+)-binding residues include Asp-145, Asp-147, Thr-149, Tyr-151, Glu-156, Asp-179, Asp-181, Asn-183, Tyr-185, and Asp-190. Positions 360, 362, 364, 366, and 371 each coordinate Ca(2+). The interval 378 to 422 is linker loop domain; the sequence is LNINKIGGGTNYSDSYPSDSHVTIQNSSTTPSPSTPITNTAAAIA. The carrier domain stretch occupies residues 432–720; it reads AQQVLESIEN…KALLPDAEYK (289 aa). Solcar repeat units lie at residues 436–526, 535–616, and 624–712; these read LESI…LRDL, IYFP…MKTI, and LGPM…LQKA. The next 6 membrane-spanning stretches (helical) occupy residues 442–459, 501–520, 545–558, 591–610, 630–647, and 687–706; these read FALG…VYPI, GILP…LTVN, GFAG…TNPL, GAGA…FPTY, LLAG…VTPA, and GALA…LVSY. The C-terminal domain stretch occupies residues 721 to 772; it reads PPTNAPITQKDFDVIRGNTNTVQRVIDMESKFGTLHQTRDNNKSSNGGENKN. Residues 751-772 form a disordered region; the sequence is KFGTLHQTRDNNKSSNGGENKN. Over residues 763–772 the composition is skewed to low complexity; the sequence is KSSNGGENKN.

The protein belongs to the mitochondrial carrier (TC 2.A.29) family. In terms of assembly, homodimer (via N-terminus).

The protein resides in the mitochondrion inner membrane. Its function is as follows. Mitochondrial and calcium-binding carrier that catalyzes the calcium-dependent exchange of cytoplasmic glutamate with mitochondrial aspartate across the mitochondrial inner membrane. This is Calcium-binding mitochondrial carrier protein (mcfO) from Dictyostelium discoideum (Social amoeba).